The sequence spans 372 residues: MRVGPVRFALSGASQPRGPGLLFPAARGTPAKRLLDTDDAGAVAAKCPRLSECSSPPDYLSPPGSPCSPQPPPSTQGTGGSCVSSPGPSRIADYLLLPLAEREHVSRALCIHTGRELRCKEFPIKHYQDKIRPYIQLPSHSNITGIVEVLLGESKAYVFFEKDFGDMHSYVRSRKRLREEEAARLFKQIVSAVAHCHQSAIVLGDLKLRKFVFSTEERTQLRLESLEDTHIIKGEDDALSDKHGCPAYVSPEILNTTGTYSGKAADVWSLGVMLYTLLVGRYPFHDSDPSALFSKIRRGQFCIPEHVSPKARCLIRSLLRREPSERLTAPQILLHPWFEYVLEPGYVDSEIGTSDQIVPEYQEDSDISSFFC.

2 disordered regions span residues 1–26 (MRVG…FPAA) and 49–85 (RLSE…CVSS). Over residues 59 to 74 (YLSPPGSPCSPQPPPS) the composition is skewed to pro residues. The Protein kinase domain maps to 91–338 (IADYLLLPLA…APQILLHPWF (248 aa)). Residues 355 to 360 (DQIVPE) carry the COP1-binding motif.

This sequence belongs to the protein kinase superfamily. CAMK Ser/Thr protein kinase family. Tribbles subfamily. As to quaternary structure, monomer. Interacts (via protein kinase domain) with CEBPA. Interacts with COP1.

In terms of biological role, adapter protein involved in protein degradation by interacting with COP1 ubiquitin ligase. Promotes CEBPA degradation and inhibits its function. Controls macrophage, eosinophil and neutrophil differentiation via the COP1-binding domain. Regulates myeloid cell differentiation by altering the expression of CEBPA in a COP1-dependent manner. Interacts with MAPK kinases and regulates activation of MAP kinases, but has no kinase activity. The sequence is that of Tribbles homolog 1 from Mus musculus (Mouse).